Reading from the N-terminus, the 703-residue chain is Bifunctional arginine dihydrolase/ornithine cyclodeaminase AgrE (703 aa).

Residues 10–269 (CPPDHYDVDY…GAAKCLTLRV (260 aa)) are arginine dihydrolase. L-arginine-binding residues include asparagine 22, aspartate 65, asparagine 71, arginine 90, and arginine 139. Asparagine 22 contributes to the L-ornithine binding site. Residues arginine 90, arginine 139, and histidine 168 each coordinate L-ornithine. Residue histidine 168 is the Proton donor/acceptor of the active site. Residues aspartate 170 and alanine 258 each coordinate L-arginine. L-ornithine is bound at residue cysteine 264. Cysteine 264 acts as the Nucleophile in catalysis. The ornithine cyclodeaminase stretch occupies residues 285 to 694 (SRIIRIEGHL…SLLTQQLDKL (410 aa)). 10 residues coordinate NAD(+): asparagine 524, alanine 525, aspartate 603, serine 635, methionine 636, leucine 637, histidine 638, aspartate 656, aspartate 679, and valine 680.

The protein in the N-terminal section; belongs to the DDAH family. This sequence in the C-terminal section; belongs to the AgrE/ArgZ ornithine cyclodeaminase family. In terms of assembly, homotetramer. It depends on NAD(+) as a cofactor.

The catalysed reaction is L-arginine + 2 H2O + 2 H(+) = L-ornithine + 2 NH4(+) + CO2. It catalyses the reaction L-ornithine = L-proline + NH4(+). With respect to regulation, ornithine cyclodeaminase activity is inhibited by ATP. Bifunctional enzyme involved in a cyanobacterial arginine utilization pathway that produces glutamate and enables cellular adaptation to nitrogen fluctuations. Catalyzes the hydrolysis of arginine to ornithine, with the release of ammonia and carbon dioxide. Then, catalyzes the conversion of ornithine to proline, with the release of ammonia. The polypeptide is Bifunctional arginine dihydrolase/ornithine cyclodeaminase AgrE (Nostoc sp. (strain PCC 7120 / SAG 25.82 / UTEX 2576)).